The following is a 387-amino-acid chain: Phosphoglycerate kinase (387 aa).

Substrate-binding positions include 21 to 23 (DLN), R36, 59 to 62 (HLGR), R113, and R146. Residues K197, E314, and 340–343 (GGDT) each bind ATP.

It belongs to the phosphoglycerate kinase family. In terms of assembly, monomer.

The protein resides in the cytoplasm. It catalyses the reaction (2R)-3-phosphoglycerate + ATP = (2R)-3-phospho-glyceroyl phosphate + ADP. The protein operates within carbohydrate degradation; glycolysis; pyruvate from D-glyceraldehyde 3-phosphate: step 2/5. The sequence is that of Phosphoglycerate kinase from Pseudomonas putida (strain ATCC 47054 / DSM 6125 / CFBP 8728 / NCIMB 11950 / KT2440).